The chain runs to 251 residues: Octanoyltransferase (251 aa).

The BPL/LPL catalytic domain occupies 56 to 237 (ADTGDEIWVV…RLIANLDGES (182 aa)). Substrate contacts are provided by residues 96–103 (RGGQITYH), 168–170 (ALG), and 181–183 (GLS). Residue cysteine 199 is the Acyl-thioester intermediate of the active site.

Belongs to the LipB family.

It is found in the cytoplasm. The enzyme catalyses octanoyl-[ACP] + L-lysyl-[protein] = N(6)-octanoyl-L-lysyl-[protein] + holo-[ACP] + H(+). The protein operates within protein modification; protein lipoylation via endogenous pathway; protein N(6)-(lipoyl)lysine from octanoyl-[acyl-carrier-protein]: step 1/2. In terms of biological role, catalyzes the transfer of endogenously produced octanoic acid from octanoyl-acyl-carrier-protein onto the lipoyl domains of lipoate-dependent enzymes. Lipoyl-ACP can also act as a substrate although octanoyl-ACP is likely to be the physiological substrate. The sequence is that of Octanoyltransferase from Burkholderia ambifaria (strain MC40-6).